The following is a 134-amino-acid chain: Small ribosomal subunit protein uS8c (134 aa).

Belongs to the universal ribosomal protein uS8 family. In terms of assembly, part of the 30S ribosomal subunit.

Its subcellular location is the plastid. It is found in the chloroplast. In terms of biological role, one of the primary rRNA binding proteins, it binds directly to 16S rRNA central domain where it helps coordinate assembly of the platform of the 30S subunit. The sequence is that of Small ribosomal subunit protein uS8c (rps8) from Pelargonium hortorum (Common geranium).